Consider the following 191-residue polypeptide: Crossover junction endodeoxyribonuclease RuvC (191 aa).

Active-site residues include Asp-7, Glu-67, and Asp-141. 3 residues coordinate Mg(2+): Asp-7, Glu-67, and Asp-141.

Belongs to the RuvC family. Homodimer which binds Holliday junction (HJ) DNA. The HJ becomes 2-fold symmetrical on binding to RuvC with unstacked arms; it has a different conformation from HJ DNA in complex with RuvA. In the full resolvosome a probable DNA-RuvA(4)-RuvB(12)-RuvC(2) complex forms which resolves the HJ. The cofactor is Mg(2+).

It is found in the cytoplasm. The catalysed reaction is Endonucleolytic cleavage at a junction such as a reciprocal single-stranded crossover between two homologous DNA duplexes (Holliday junction).. Functionally, the RuvA-RuvB-RuvC complex processes Holliday junction (HJ) DNA during genetic recombination and DNA repair. Endonuclease that resolves HJ intermediates. Cleaves cruciform DNA by making single-stranded nicks across the HJ at symmetrical positions within the homologous arms, yielding a 5'-phosphate and a 3'-hydroxyl group; requires a central core of homology in the junction. The consensus cleavage sequence is 5'-(A/T)TT(C/G)-3'. Cleavage occurs on the 3'-side of the TT dinucleotide at the point of strand exchange. HJ branch migration catalyzed by RuvA-RuvB allows RuvC to scan DNA until it finds its consensus sequence, where it cleaves and resolves the cruciform DNA. This chain is Crossover junction endodeoxyribonuclease RuvC, found in Myxococcus xanthus (strain DK1622).